The sequence spans 554 residues: Serine/threonine-protein phosphatase 2B catalytic subunit (554 aa).

Fe cation-binding residues include Asp119, His121, and Asp147. Zn(2+) is bound by residues Asp147 and Asn179. His180 (proton donor) is an active-site residue. Residues His228 and His310 each contribute to the Zn(2+) site. A disordered region spans residues 411 to 433 (LKESAPTQHKQPAPSENENKADQ). A compositionally biased stretch (polar residues) spans 415–426 (APTQHKQPAPSE).

This sequence belongs to the PPP phosphatase family. PP-2B subfamily. In terms of assembly, composed of two components (A and B), the A component is the catalytic subunit and the B component confers calcium sensitivity. The cofactor is Fe(3+). Zn(2+) serves as cofactor.

It catalyses the reaction O-phospho-L-seryl-[protein] + H2O = L-seryl-[protein] + phosphate. The catalysed reaction is O-phospho-L-threonyl-[protein] + H2O = L-threonyl-[protein] + phosphate. Its function is as follows. Calcium-dependent, calmodulin-stimulated protein phosphatase. This subunit may have a role in the calmodulin activation of calcineurin. Appears to be involved in cytokinesis, mating, transport, nuclear and spindle pole body positioning, and cell shape. In Schizosaccharomyces pombe (strain 972 / ATCC 24843) (Fission yeast), this protein is Serine/threonine-protein phosphatase 2B catalytic subunit (ppb1).